Here is an 804-residue protein sequence, read N- to C-terminus: MKFTLSWLKDHLETDATLDEIVEKLTDIGLEVESVDDRAAFRAFTIARVLTATRHPDADKLQVLSVDTGDGKPVQVVCGAPNARAGLVGVLGRPGDYVPGLDVTLSVGKIRGVESFGMMCSERELELSDEHNGIIDLAENAPVGTSFAAYMGLDDPIIEIGLTPNRADCTGIRGIARDLAAAGLGTLKNTLPDAVKGEGETPVKVILDQDAGNPFCTGFALRMVKGVKNGPSPKWMQQRLKAIGLRPINALVDITNYVTFDQGRPLHVFDAAKVKGNLTVRTARDGETILALDQREYKLNAGMYVIADENGPESIAGIMGGEHSGCDENTVDVLIESALWDPRMIASTGRELGIVTDARYRFERGVDPEMMVPGAEIATKLVLELCGGQPTVLDVVGYKPHTARVIDFPVTEVKRLTGLDVSYEDAFDILKRLGFGVEGDGKTIRATVPSWRGDVEGKADLVEEVMRIHGINRIDPQPLPSHGAVNGRILTTLQIRTRHARRMLASRGMMEAVTYSFISEAQAKAFGGGKPELKLANPIAADMSDMRPSLLPGLLAAAQRNADRGFDDIALFEVSGIYEGDTPDKQRRVAGGVRRGTAKVEGAGRFWAGNAAPVGVFDAKADALAALEAAGAPVDRIQIEAGGPEWLHPGRSGTLKLGPKVVLGTFGEFHPDTLEALDVSGALCGFEVYLDAIPEPKAKSARTKPALSLSLFQSLKRDYAFVVDAAVEAGNVVKAVSSADKKLIVGVQVFDIFTGASLGEGKKSIAVEVLLQPQDRTLTDEDLEALSKQIVASVAKQTGGVLRG.

The tRNA-binding domain maps to 38 to 148 (RAAFRAFTIA…ENAPVGTSFA (111 aa)). Positions 401–476 (HTARVIDFPV…RIHGINRIDP (76 aa)) constitute a B5 domain. Mg(2+)-binding residues include D454, D460, E463, and E464. The FDX-ACB domain occupies 710-803 (SLFQSLKRDY…VAKQTGGVLR (94 aa)).

The protein belongs to the phenylalanyl-tRNA synthetase beta subunit family. Type 1 subfamily. Tetramer of two alpha and two beta subunits. Mg(2+) is required as a cofactor.

The protein resides in the cytoplasm. The catalysed reaction is tRNA(Phe) + L-phenylalanine + ATP = L-phenylalanyl-tRNA(Phe) + AMP + diphosphate + H(+). In Brucella abortus (strain 2308), this protein is Phenylalanine--tRNA ligase beta subunit.